Consider the following 607-residue polypeptide: Elongation factor 4 (607 aa).

Residues 11 to 193 (ENIRNFSIIA…KIVEVVPPPE (183 aa)) form the tr-type G domain. Residues 23-28 (DHGKST) and 140-143 (NKID) contribute to the GTP site.

Belongs to the TRAFAC class translation factor GTPase superfamily. Classic translation factor GTPase family. LepA subfamily.

The protein localises to the cell membrane. It carries out the reaction GTP + H2O = GDP + phosphate + H(+). In terms of biological role, required for accurate and efficient protein synthesis under certain stress conditions. May act as a fidelity factor of the translation reaction, by catalyzing a one-codon backward translocation of tRNAs on improperly translocated ribosomes. Back-translocation proceeds from a post-translocation (POST) complex to a pre-translocation (PRE) complex, thus giving elongation factor G a second chance to translocate the tRNAs correctly. Binds to ribosomes in a GTP-dependent manner. The protein is Elongation factor 4 of Staphylococcus haemolyticus (strain JCSC1435).